We begin with the raw amino-acid sequence, 669 residues long: Translation factor GUF1, mitochondrial (669 aa).

The N-terminal 49 residues, 1-49, are a transit peptide targeting the mitochondrion; it reads MWTLAGQGWWRGRALAAWVTEAARKGLLWPHLAPARGTAAESRAPDRCY. Residues 66-247 enclose the tr-type G domain; that stretch reads ENTRNFSIIA…AVIKRIPFPK (182 aa). Residues 75-82, 140-144, and 194-197 each bind GTP; these read AHVDHGKS, DTPGH, and NKID.

The protein belongs to the TRAFAC class translation factor GTPase superfamily. Classic translation factor GTPase family. LepA subfamily.

The protein resides in the mitochondrion inner membrane. The catalysed reaction is GTP + H2O = GDP + phosphate + H(+). Functionally, promotes mitochondrial protein synthesis. May act as a fidelity factor of the translation reaction, by catalyzing a one-codon backward translocation of tRNAs on improperly translocated ribosomes. Binds to mitochondrial ribosomes in a GTP-dependent manner. In Bos taurus (Bovine), this protein is Translation factor GUF1, mitochondrial.